Consider the following 56-residue polypeptide: Preprotein translocase subunit SecG (56 aa).

Topologically, residues 1–29 (MAKEKATLPPTGAGLMRFFDEDTRAVKVS) are cytoplasmic. The chain crosses the membrane as a helical span at residues 30-49 (PKGVIALTLLLIAFEFILHM). Residues 50 to 56 (FGSSIFG) are Extracellular-facing.

This sequence belongs to the SEC61-beta family. In terms of assembly, component of the protein translocase complex. Heterotrimer consisting of alpha (SecY), beta (SecG) and gamma (SecE) subunits. Can form oligomers of the heterotrimer.

The protein localises to the cell membrane. Involved in protein export. The function of the beta subunit is unknown, but it may be involved in stabilization of the trimeric complex. This Thermococcus kodakarensis (strain ATCC BAA-918 / JCM 12380 / KOD1) (Pyrococcus kodakaraensis (strain KOD1)) protein is Preprotein translocase subunit SecG.